The following is a 289-amino-acid chain: Eukaryotic translation initiation factor 3 subunit G (289 aa).

The tract at residues 1-33 (MSRPTKADWADDEEFDDPSALPPQQITTNKDGT) is disordered. The 79-residue stretch at 209–287 (ATLRVTNVSE…LILRVEFAKR (79 aa)) folds into the RRM domain.

It belongs to the eIF-3 subunit G family. In terms of assembly, component of the eukaryotic translation initiation factor 3 (eIF-3) complex.

It localises to the cytoplasm. Its function is as follows. RNA-binding component of the eukaryotic translation initiation factor 3 (eIF-3) complex, which is involved in protein synthesis of a specialized repertoire of mRNAs and, together with other initiation factors, stimulates binding of mRNA and methionyl-tRNAi to the 40S ribosome. The eIF-3 complex specifically targets and initiates translation of a subset of mRNAs involved in cell proliferation. This subunit can bind 18S rRNA. This is Eukaryotic translation initiation factor 3 subunit G (tif35) from Emericella nidulans (strain FGSC A4 / ATCC 38163 / CBS 112.46 / NRRL 194 / M139) (Aspergillus nidulans).